The chain runs to 580 residues: 9,13-epoxylabda-14-ene synthase, chloroplastic (580 aa).

The transit peptide at 1-32 (MSITFNLKIAPFSGPGIQRSKETFPATEIQIT) directs the protein to the chloroplast. Asp322, Asp326, Asn466, Thr470, and Glu474 together coordinate Mg(2+). A DDXXD motif motif is present at residues 322-326 (DDFFD).

This sequence belongs to the terpene synthase family. Requires Mg(2+) as cofactor. As to expression, present in both leaves and flowers, with higher levels in leaves.

It is found in the plastid. The protein localises to the chloroplast. It carries out the reaction peregrinol diphosphate = (13R)-9,13-epoxylabd-14-ene + diphosphate. The enzyme catalyses (+)-copalyl diphosphate = miltiradiene + diphosphate. The catalysed reaction is 8-hydroxycopalyl diphosphate = (13R)-manoyl oxide + diphosphate. The protein operates within secondary metabolite biosynthesis; terpenoid biosynthesis. Functionally, involved in the biosynthesis of labdane-type diterpenoid including marrubiin and other labdane-related furanoid diterpenoids with potential applications as anti-diabetics, analgesics or vasorelaxants. Terpene synthase the catalyzes the conversion of peregrinol diphosphate to 9,13(R)-epoxy-labd-14-ene, from (+)-copalyl diphosphate ((+)-CPP) to miltiradiene and from 8-hydroxycopalyl diphosphate (LPP, labda-13-en-8-ol diphosphate) to manoyl oxide. This is 9,13-epoxylabda-14-ene synthase, chloroplastic from Marrubium vulgare (White horehound).